The primary structure comprises 172 residues: Transcriptional repressor NrdR (172 aa).

A zinc finger spans residues 3–34 (CPFCGAPDTRVIDSRLAGEGDQVRRRRECLSC). The 91-residue stretch at 49–139 (PRVVKRDGSR…VYLSFADVQA (91 aa)) folds into the ATP-cone domain.

It belongs to the NrdR family. It depends on Zn(2+) as a cofactor.

Its function is as follows. Negatively regulates transcription of bacterial ribonucleotide reductase nrd genes and operons by binding to NrdR-boxes. The protein is Transcriptional repressor NrdR of Thioalkalivibrio sulfidiphilus (strain HL-EbGR7).